The following is a 382-amino-acid chain: Alkanesulfonate monooxygenase (382 aa).

It belongs to the SsuD family.

The enzyme catalyses an alkanesulfonate + FMNH2 + O2 = an aldehyde + FMN + sulfite + H2O + 2 H(+). Its function is as follows. Catalyzes the desulfonation of aliphatic sulfonates. The polypeptide is Alkanesulfonate monooxygenase (Pseudomonas sp).